The sequence spans 194 residues: Small ribosomal subunit protein uS4c (194 aa).

One can recognise an S4 RNA-binding domain in the interval 82–143 (MRLDNILFRL…KQRSKALIQN (62 aa)).

The protein belongs to the universal ribosomal protein uS4 family. As to quaternary structure, part of the 30S ribosomal subunit. Contacts protein S5. The interaction surface between S4 and S5 is involved in control of translational fidelity.

The protein localises to the plastid. Its subcellular location is the chloroplast. Functionally, one of the primary rRNA binding proteins, it binds directly to 16S rRNA where it nucleates assembly of the body of the 30S subunit. With S5 and S12 plays an important role in translational accuracy. This Sisyrinchium striatum (Satin flower) protein is Small ribosomal subunit protein uS4c (rps4).